The primary structure comprises 55 residues: Ribosome modulation factor (55 aa).

This sequence belongs to the ribosome modulation factor family. Associates exclusively with 100S ribosomes.

The protein resides in the cytoplasm. During stationary phase, converts 70S ribosomes to an inactive dimeric form (100S ribosomes). May form immature 90S particles, which are converted to mature 100S ribosomes by the hibernation promoting factor Hpf. The chain is Ribosome modulation factor from Escherichia coli O157:H7.